Consider the following 340-residue polypeptide: Zinc finger protein 367 (340 aa).

The interval 101 to 140 (GAPQSSASVAAVSGGEDEEEASSPDSGHLKDGIRRGRPRA) is disordered. A compositionally biased stretch (basic and acidic residues) spans 127-140 (GHLKDGIRRGRPRA). C2H2-type zinc fingers lie at residues 157 to 179 (IRCNICNRVFPREKSLQAHKRTH) and 185 to 209 (YLCDYPDCGKAFVQSGQLKTHQRLH). The tract at residues 280–317 (KGKLVQKADQEQQDPLEYLQSDEEDDEKSGAQRRLQEQ) is disordered. Residues 299-332 (QSDEEDDEKSGAQRRLQEQRERLHGALALIELAN) adopt a coiled-coil conformation. S300 carries the phosphoserine modification. Over residues 307 to 317 (KSGAQRRLQEQ) the composition is skewed to basic and acidic residues.

It belongs to the krueppel C2H2-type zinc-finger protein family. As to expression, expressed in bone marrow and ovary.

It localises to the nucleus. Transcriptional activator. Isoform 1 may be involved in transcriptional activation of erythroid genes. In Mus musculus (Mouse), this protein is Zinc finger protein 367 (Znf367).